The primary structure comprises 354 residues: Protein-arginine kinase (354 aa).

Residues 24–254 (IVLSSRIRLA…QQIIQQEKMA (231 aa)) form the Phosphagen kinase C-terminal domain. ATP contacts are provided by residues 27-31 (SSRIR), His-92, Arg-125, 176-180 (RASVM), and 207-212 (RGIYGE). The RDXXRA motif of the pArg binding pocket involved in allosteric regulation signature appears at 337 to 342 (RDYRRA).

This sequence belongs to the ATP:guanido phosphotransferase family.

The catalysed reaction is L-arginyl-[protein] + ATP = N(omega)-phospho-L-arginyl-[protein] + ADP + H(+). With respect to regulation, appears to be allosterically activated by the binding of pArg-containing polypeptides to the pArg-binding pocket localized in the C-terminal domain of McsB. In terms of biological role, catalyzes the specific phosphorylation of arginine residues in a large number of proteins. Is part of the bacterial stress response system. Protein arginine phosphorylation has a physiologically important role and is involved in the regulation of many critical cellular processes, such as protein homeostasis, motility, competence, and stringent and stress responses, by regulating gene expression and protein activity. The protein is Protein-arginine kinase of Bacillus cereus (strain ATCC 10987 / NRS 248).